A 469-amino-acid polypeptide reads, in one-letter code: Serine hydroxymethyltransferase, cytosolic (469 aa).

K248 carries the N6-(pyridoxal phosphate)lysine modification.

It belongs to the SHMT family. In terms of assembly, homotetramer. Pyridoxal 5'-phosphate serves as cofactor.

It is found in the cytoplasm. The catalysed reaction is (6R)-5,10-methylene-5,6,7,8-tetrahydrofolate + glycine + H2O = (6S)-5,6,7,8-tetrahydrofolate + L-serine. Its pathway is one-carbon metabolism; tetrahydrofolate interconversion. Interconversion of serine and glycine. This is Serine hydroxymethyltransferase, cytosolic (SHM2) from Candida glabrata (strain ATCC 2001 / BCRC 20586 / JCM 3761 / NBRC 0622 / NRRL Y-65 / CBS 138) (Yeast).